The chain runs to 186 residues: Translation initiation factor IF-3 (186 aa).

It belongs to the IF-3 family. In terms of assembly, monomer.

The protein localises to the cytoplasm. Its function is as follows. IF-3 binds to the 30S ribosomal subunit and shifts the equilibrium between 70S ribosomes and their 50S and 30S subunits in favor of the free subunits, thus enhancing the availability of 30S subunits on which protein synthesis initiation begins. The chain is Translation initiation factor IF-3 from Borreliella afzelii (strain PKo) (Borrelia afzelii).